Here is a 148-residue protein sequence, read N- to C-terminus: Large ribosomal subunit protein uL13 (148 aa).

This sequence belongs to the universal ribosomal protein uL13 family. In terms of assembly, part of the 50S ribosomal subunit.

Its function is as follows. This protein is one of the early assembly proteins of the 50S ribosomal subunit, although it is not seen to bind rRNA by itself. It is important during the early stages of 50S assembly. This Sulfolobus acidocaldarius (strain ATCC 33909 / DSM 639 / JCM 8929 / NBRC 15157 / NCIMB 11770) protein is Large ribosomal subunit protein uL13.